The sequence spans 474 residues: Glutamate--tRNA ligase (474 aa).

Residues 9–19 (PSPTGYLHVGG) carry the 'HIGH' region motif. The short motif at 240 to 244 (KLSKR) is the 'KMSKS' region element. Lysine 243 contributes to the ATP binding site.

This sequence belongs to the class-I aminoacyl-tRNA synthetase family. Glutamate--tRNA ligase type 1 subfamily. Monomer.

The protein resides in the cytoplasm. The catalysed reaction is tRNA(Glu) + L-glutamate + ATP = L-glutamyl-tRNA(Glu) + AMP + diphosphate. Catalyzes the attachment of glutamate to tRNA(Glu) in a two-step reaction: glutamate is first activated by ATP to form Glu-AMP and then transferred to the acceptor end of tRNA(Glu). This chain is Glutamate--tRNA ligase, found in Aliivibrio salmonicida (strain LFI1238) (Vibrio salmonicida (strain LFI1238)).